We begin with the raw amino-acid sequence, 437 residues long: Type II methyltransferase M.HgiBI (437 aa).

One can recognise an SAM-dependent MTase C5-type domain in the interval phenylalanine 4–glutamate 431. Residue cysteine 75 is part of the active site.

The protein belongs to the class I-like SAM-binding methyltransferase superfamily. C5-methyltransferase family.

It carries out the reaction a 2'-deoxycytidine in DNA + S-adenosyl-L-methionine = a 5-methyl-2'-deoxycytidine in DNA + S-adenosyl-L-homocysteine + H(+). Its function is as follows. A methylase that recognizes the double-stranded sequence 5'-GGWCC-3', methylates C-? on both strands, and protects the DNA from cleavage by the HgiBI endonuclease. This system is less active than isoschizomeric RM.HgiEI. The chain is Type II methyltransferase M.HgiBI from Herpetosiphon aurantiacus (Herpetosiphon giganteus).